The sequence spans 158 residues: Cyclic pyranopterin monophosphate synthase (158 aa).

Substrate contacts are provided by residues 76 to 78 and 114 to 115; these read MCH and ME. Residue Asp129 is part of the active site.

It belongs to the MoaC family. As to quaternary structure, homohexamer; trimer of dimers.

The enzyme catalyses (8S)-3',8-cyclo-7,8-dihydroguanosine 5'-triphosphate = cyclic pyranopterin phosphate + diphosphate. The protein operates within cofactor biosynthesis; molybdopterin biosynthesis. In terms of biological role, catalyzes the conversion of (8S)-3',8-cyclo-7,8-dihydroguanosine 5'-triphosphate to cyclic pyranopterin monophosphate (cPMP). The sequence is that of Cyclic pyranopterin monophosphate synthase from Clostridium perfringens (strain 13 / Type A).